Consider the following 273-residue polypeptide: Dermonecrotic toxin (273 aa).

Glutamate 20 and aspartate 22 together coordinate Mg(2+). The active-site Nucleophile is histidine 35. A disulfide bridge links cysteine 39 with cysteine 45. Residue aspartate 79 coordinates Mg(2+).

It belongs to the arthropod phospholipase D family. Class I subfamily. Mg(2+) is required as a cofactor. Expressed by the venom gland.

Its subcellular location is the secreted. The enzyme catalyses an N-(acyl)-sphingosylphosphocholine = an N-(acyl)-sphingosyl-1,3-cyclic phosphate + choline. It carries out the reaction an N-(acyl)-sphingosylphosphoethanolamine = an N-(acyl)-sphingosyl-1,3-cyclic phosphate + ethanolamine. It catalyses the reaction a 1-acyl-sn-glycero-3-phosphocholine = a 1-acyl-sn-glycero-2,3-cyclic phosphate + choline. The catalysed reaction is a 1-acyl-sn-glycero-3-phosphoethanolamine = a 1-acyl-sn-glycero-2,3-cyclic phosphate + ethanolamine. Functionally, dermonecrotic toxins cleave the phosphodiester linkage between the phosphate and headgroup of certain phospholipids (sphingolipid and lysolipid substrates), forming an alcohol (often choline) and a cyclic phosphate. This toxin acts on sphingomyelin (SM). It may also act on ceramide phosphoethanolamine (CPE), lysophosphatidylcholine (LPC) and lysophosphatidylethanolamine (LPE), but not on lysophosphatidylserine (LPS), and lysophosphatidylglycerol (LPG). It acts by transphosphatidylation, releasing exclusively cyclic phosphate products as second products. Induces dermonecrosis, hemolysis, increased vascular permeability, edema, inflammatory response, and platelet aggregation. This Loxosceles laeta (South American recluse spider) protein is Dermonecrotic toxin.